Consider the following 185-residue polypeptide: Protein C2-DOMAIN ABA-RELATED 9 (185 aa).

The C2 domain occupies 1–104 (MEDKPLGILR…LEAHQMELDF (104 aa)). Ca(2+) contacts are provided by arginine 22, aspartate 23, aspartate 28, aspartate 74, lysine 75, aspartate 76, and aspartate 82.

This sequence belongs to the plant CAR protein family. Binds to PYR/PYL/RCAR abscisic acid intracellular receptors in an ABA-independent manner, both at the plasma membrane and in the nucleus. Interacts with LOT1 in the nuleus; this interaction is repressed by abscisic acid (ABA) and is sensitive to calcium ion Ca(2+), leading to free CAR9 accumulation at the plasma membrane. Ca(2+) serves as cofactor.

It is found in the cell membrane. The protein localises to the nucleus. Functionally, stimulates the GTPase/ATPase activities of Obg-like ATPases. Mediates the transient calcium-dependent interaction of PYR/PYL/RCAR abscisic acid (ABA) receptors with the plasma membrane and thus regulates ABA sensitivity. The chain is Protein C2-DOMAIN ABA-RELATED 9 from Arabidopsis thaliana (Mouse-ear cress).